The chain runs to 3227 residues: E3 ubiquitin-protein ligase ptr1 (3227 aa).

Disordered stretches follow at residues 1806–1836 (SGAAQDSMGDQSLSSSSEESSDSDREEPPDL), 1869–1894 (MEFEDDQSGSADSVVSEDDADDVMYS), 1908–1929 (QDASSQNDDSSFDEASSHGDVI), and 2577–2607 (ATTGYTNDQDSRGSTVPKQDPGTTASRKDKK). A compositionally biased stretch (low complexity) spans 1811–1823 (DSMGDQSLSSSSE). Residues 1883–1894 (VSEDDADDVMYS) show a composition bias toward acidic residues. Positions 2577–2601 (ATTGYTNDQDSRGSTVPKQDPGTTA) are enriched in polar residues. One can recognise an HECT domain in the interval 2891 to 3227 (DADEVKFSKL…NEGSEGFGFA (337 aa)). Cys3194 (glycyl thioester intermediate) is an active-site residue.

It belongs to the UPL family. TOM1/PTR1 subfamily.

The protein resides in the nucleus. The catalysed reaction is S-ubiquitinyl-[E2 ubiquitin-conjugating enzyme]-L-cysteine + [acceptor protein]-L-lysine = [E2 ubiquitin-conjugating enzyme]-L-cysteine + N(6)-ubiquitinyl-[acceptor protein]-L-lysine.. Its pathway is protein modification; protein ubiquitination. Its function is as follows. Probable ubiquitin ligase protein involved in mRNA export. E3 ubiquitin ligase proteins mediate ubiquitination and subsequent proteasomal degradation of target proteins. Probably participates in mRNA export from the nucleus by regulating the transport of hnRNP proteins such as rae1. This chain is E3 ubiquitin-protein ligase ptr1 (ptr1), found in Schizosaccharomyces pombe (strain 972 / ATCC 24843) (Fission yeast).